Here is a 185-residue protein sequence, read N- to C-terminus: Testis development-related protein (185 aa).

Disordered stretches follow at residues 1–29 (MWKLGRGRVLLDEPPEEEDGLRGGPPPAA) and 121–156 (ADPEDTVGGHPSWSGWEDDAKGSTKYTSLASSANSS).

This sequence belongs to the TDRP family. As to quaternary structure, interacts with PRM2. In terms of tissue distribution, expressed in spermatogenic cells, especially in spermatocytes (at protein level).

It is found in the nucleus. It localises to the cytoplasm. Its function is as follows. Contributes to normal sperm motility, but not essential for male fertility. The sequence is that of Testis development-related protein (TDRP) from Homo sapiens (Human).